The primary structure comprises 66 residues: Large ribosomal subunit protein uL29 (66 aa).

Belongs to the universal ribosomal protein uL29 family.

The polypeptide is Large ribosomal subunit protein uL29 (Mesorhizobium japonicum (strain LMG 29417 / CECT 9101 / MAFF 303099) (Mesorhizobium loti (strain MAFF 303099))).